The primary structure comprises 177 residues: Inner membrane-spanning protein YciB (177 aa).

A run of 5 helical transmembrane segments spans residues 23-43 (MFVATGVAIAATAVMVAWAWF), 50-70 (TMQWISLGLIVVLGGATLLLH), 73-93 (HFIMWKPTVLYWVMGAGLLIS), 119-139 (LTWAWSGFFAFMGALNLFVAY), and 149-169 (FKLFGGMGLMLLFVIAQSLFL).

The protein belongs to the YciB family.

The protein resides in the cell inner membrane. Plays a role in cell envelope biogenesis, maintenance of cell envelope integrity and membrane homeostasis. The sequence is that of Inner membrane-spanning protein YciB from Chromobacterium violaceum (strain ATCC 12472 / DSM 30191 / JCM 1249 / CCUG 213 / NBRC 12614 / NCIMB 9131 / NCTC 9757 / MK).